We begin with the raw amino-acid sequence, 62 residues long: Sperm protamine P1 (62 aa).

Residues 1–62 (MARYRHSRSR…RYSRRGRRRY (62 aa)) are disordered.

The protein belongs to the protamine P1 family. As to expression, testis.

The protein localises to the nucleus. Its subcellular location is the chromosome. Its function is as follows. Protamines substitute for histones in the chromatin of sperm during the haploid phase of spermatogenesis. They compact sperm DNA into a highly condensed, stable and inactive complex. The chain is Sperm protamine P1 (PRM1) from Trichosurus vulpecula (Brush-tailed possum).